The following is a 152-amino-acid chain: Protein-export protein SecB (152 aa).

The protein belongs to the SecB family. Homotetramer, a dimer of dimers. One homotetramer interacts with 1 SecA dimer.

It localises to the cytoplasm. In terms of biological role, one of the proteins required for the normal export of preproteins out of the cell cytoplasm. It is a molecular chaperone that binds to a subset of precursor proteins, maintaining them in a translocation-competent state. It also specifically binds to its receptor SecA. The protein is Protein-export protein SecB of Rickettsia akari (strain Hartford).